We begin with the raw amino-acid sequence, 189 residues long: Glycerol-3-phosphate acyltransferase (189 aa).

5 consecutive transmembrane segments (helical) span residues 1–21 (MFWL…AIVL), 50–70 (KLAI…VLLA), 77–97 (LHAQ…PLYF), 111–131 (MLMG…LLTF), and 151–171 (LLAW…VMIV).

The protein belongs to the PlsY family. In terms of assembly, probably interacts with PlsX.

The protein resides in the cell inner membrane. It carries out the reaction an acyl phosphate + sn-glycerol 3-phosphate = a 1-acyl-sn-glycero-3-phosphate + phosphate. It functions in the pathway lipid metabolism; phospholipid metabolism. Its function is as follows. Catalyzes the transfer of an acyl group from acyl-phosphate (acyl-PO(4)) to glycerol-3-phosphate (G3P) to form lysophosphatidic acid (LPA). This enzyme utilizes acyl-phosphate as fatty acyl donor, but not acyl-CoA or acyl-ACP. The polypeptide is Glycerol-3-phosphate acyltransferase (Pseudomonas putida (strain ATCC 700007 / DSM 6899 / JCM 31910 / BCRC 17059 / LMG 24140 / F1)).